We begin with the raw amino-acid sequence, 202 residues long: FMN-dependent NADH:quinone oxidoreductase 1 (202 aa).

Residues Ser-9, 15–17, 95–98, and 139–142 contribute to the FMN site; these read SAS, MYNF, and TSGG.

The protein belongs to the azoreductase type 1 family. Homodimer. FMN serves as cofactor.

It catalyses the reaction 2 a quinone + NADH + H(+) = 2 a 1,4-benzosemiquinone + NAD(+). It carries out the reaction N,N-dimethyl-1,4-phenylenediamine + anthranilate + 2 NAD(+) = 2-(4-dimethylaminophenyl)diazenylbenzoate + 2 NADH + 2 H(+). Quinone reductase that provides resistance to thiol-specific stress caused by electrophilic quinones. In terms of biological role, also exhibits azoreductase activity. Catalyzes the reductive cleavage of the azo bond in aromatic azo compounds to the corresponding amines. This Pseudomonas syringae pv. tomato (strain ATCC BAA-871 / DC3000) protein is FMN-dependent NADH:quinone oxidoreductase 1.